The chain runs to 502 residues: Medium/long-chain-fatty-acid--CoA ligase FadD17 (502 aa).

The protein belongs to the ATP-dependent AMP-binding enzyme family.

The enzyme catalyses a medium-chain fatty acid + ATP + CoA = a medium-chain fatty acyl-CoA + AMP + diphosphate. It carries out the reaction a long-chain fatty acid + ATP + CoA = a long-chain fatty acyl-CoA + AMP + diphosphate. Its pathway is lipid metabolism; fatty acid biosynthesis. Functionally, catalyzes the activation of medium/long-chain fatty acids as acyl-coenzyme A (acyl-CoA), which are then transferred to the multifunctional polyketide synthase (PKS) type III for further chain extension. The chain is Medium/long-chain-fatty-acid--CoA ligase FadD17 (fadD17) from Mycobacterium bovis (strain ATCC BAA-935 / AF2122/97).